The chain runs to 330 residues: Phenylalanine--tRNA ligase alpha subunit (330 aa).

Position 246 (E246) interacts with Mg(2+).

Belongs to the class-II aminoacyl-tRNA synthetase family. Phe-tRNA synthetase alpha subunit type 1 subfamily. As to quaternary structure, tetramer of two alpha and two beta subunits. It depends on Mg(2+) as a cofactor.

It is found in the cytoplasm. The enzyme catalyses tRNA(Phe) + L-phenylalanine + ATP = L-phenylalanyl-tRNA(Phe) + AMP + diphosphate + H(+). This is Phenylalanine--tRNA ligase alpha subunit from Sulfurovum sp. (strain NBC37-1).